The sequence spans 38 residues: Potassium channel toxin alpha-KTx 6.4 (38 aa).

4 disulfide bridges follow: Cys-6–Cys-27, Cys-12–Cys-32, Cys-16–Cys-34, and Cys-22–Cys-37.

It belongs to the short scorpion toxin superfamily. Potassium channel inhibitor family. Alpha-KTx 06 subfamily. As to expression, expressed by the venom gland.

The protein localises to the secreted. Its function is as follows. Potently, completely and reversibly blocks voltage-gated potassium channel Kv1.2/KCNA2 and Shaker B (Sh). Also blocks small conductance (SK) calcium-activated potassium channel (KCNN). This Pandinus imperator (Emperor scorpion) protein is Potassium channel toxin alpha-KTx 6.4.